The primary structure comprises 291 residues: Glycine--tRNA ligase alpha subunit (291 aa).

This sequence belongs to the class-II aminoacyl-tRNA synthetase family. Tetramer of two alpha and two beta subunits.

The protein resides in the cytoplasm. The enzyme catalyses tRNA(Gly) + glycine + ATP = glycyl-tRNA(Gly) + AMP + diphosphate. The chain is Glycine--tRNA ligase alpha subunit from Nitratidesulfovibrio vulgaris (strain DSM 19637 / Miyazaki F) (Desulfovibrio vulgaris).